A 428-amino-acid polypeptide reads, in one-letter code: MTGNKIDQATPTEMMAGMAKKARLASQILAQAPTAQKAEALVLTADAIRRHSADILAANAQDVATAENNQSSSAMVDRLRLTEARLENMASALEVIAHLEDPVGQIIDKRTRPNGLELTRIRVPIGVIGIIYESRPNVTIDAAALTLMSGNAAILRGGSEAIHSNKALYQTMREGLAKAGLPEEAIQLVPTTDRALVGAMLTASGLIDLVIPRGGKSLVARVQQDARVPVLAHLDGINHSYVHKEADPEKVEKVVVNAKMRRTGICGATESLLIDRGYPVEKVKSLLQALHNAGCEIRGTAEIQKIDPEAKAVSEEDWGTEYLDAVLSVRFVDDMDDALSHIARYSSGHTDAILTENREVAEKFLASVDSAIVMWNASTQFADGGEFGLGAEIGIATGRIHARGPVALEGLTSYKWQVRGTGQIRPVA.

Belongs to the gamma-glutamyl phosphate reductase family.

The protein localises to the cytoplasm. The enzyme catalyses L-glutamate 5-semialdehyde + phosphate + NADP(+) = L-glutamyl 5-phosphate + NADPH + H(+). It participates in amino-acid biosynthesis; L-proline biosynthesis; L-glutamate 5-semialdehyde from L-glutamate: step 2/2. In terms of biological role, catalyzes the NADPH-dependent reduction of L-glutamate 5-phosphate into L-glutamate 5-semialdehyde and phosphate. The product spontaneously undergoes cyclization to form 1-pyrroline-5-carboxylate. The polypeptide is Gamma-glutamyl phosphate reductase (Zymomonas mobilis subsp. mobilis (strain ATCC 31821 / ZM4 / CP4)).